Here is a 624-residue protein sequence, read N- to C-terminus: (-)-beta-phellandrene synthase 2, chloroplastic (624 aa).

A chloroplast-targeting transit peptide spans 1–47 (MALVSVAPLVSMRRSLFSSPYELKSIDKTIPNLVMCRKRMLGRPSIR). Residues aspartate 375, aspartate 379, and aspartate 527 each coordinate Mg(2+). Positions 375–379 (DDIYD) match the DDXXD motif motif.

It belongs to the terpene synthase family. Tpsd subfamily. Requires Mg(2+) as cofactor. Mn(2+) serves as cofactor.

The protein localises to the plastid. It is found in the chloroplast. It carries out the reaction (2E)-geranyl diphosphate = (-)-beta-phellandrene + diphosphate. The protein operates within terpene metabolism; oleoresin biosynthesis. Its pathway is secondary metabolite biosynthesis; terpenoid biosynthesis. In terms of biological role, monoterpene synthase (TPS) involved in the biosynthesis of monoterpene natural products included in conifer oleoresin secretions and volatile emissions; these compounds contribute to biotic and abiotic stress defense against herbivores and pathogens. Catalyzes the conversion of (2E)-geranyl diphosphate (GPP) to (-)-beta-phellandrene. In Pinus contorta (Shore pine), this protein is (-)-beta-phellandrene synthase 2, chloroplastic.